The following is a 153-amino-acid chain: Arachidonate 5-lipoxygenase-activating protein (153 aa).

Residues M1 to N8 lie on the Lumenal side of the membrane. The chain crosses the membrane as a helical span at residues V9–V30. At E31–R52 the chain is on the cytoplasmic side. The helical transmembrane segment at V53–L77 threads the bilayer. Topologically, residues C78–Q80 are lumenal. A helical membrane pass occupies residues V81–L102. The Cytoplasmic portion of the chain corresponds to G103–Q107. The stretch at S108–G115 is an intramembrane region. The chain crosses the membrane as a helical span at residues K116–A128. The Lumenal portion of the chain corresponds to G129–T153.

Belongs to the MAPEG family. In terms of assembly, homotrimer. Interacts with LTC4S and ALOX5.

It localises to the nucleus membrane. Its subcellular location is the endoplasmic reticulum membrane. Functionally, required for leukotriene biosynthesis by ALOX5 (5-lipoxygenase). Anchors ALOX5 to the membrane. Binds arachidonic acid, and could play an essential role in the transfer of arachidonic acid to ALOX5. Binds to MK-886, a compound that blocks the biosynthesis of leukotrienes. The protein is Arachidonate 5-lipoxygenase-activating protein (ALOX5AP) of Equus caballus (Horse).